The sequence spans 140 residues: UPF0336 protein TW736 (140 aa).

This sequence belongs to the UPF0336 family.

This Tropheryma whipplei (strain TW08/27) (Whipple's bacillus) protein is UPF0336 protein TW736.